We begin with the raw amino-acid sequence, 81 residues long: Translational regulator CsrA (81 aa).

This sequence belongs to the CsrA/RsmA family. In terms of assembly, homodimer; the beta-strands of each monomer intercalate to form a hydrophobic core, while the alpha-helices form wings that extend away from the core.

The protein resides in the cytoplasm. In terms of biological role, a translational regulator that binds mRNA to regulate translation initiation and/or mRNA stability. Usually binds in the 5'-UTR at or near the Shine-Dalgarno sequence preventing ribosome-binding, thus repressing translation. Its main target seems to be the major flagellin gene, while its function is anatagonized by FliW. The polypeptide is Translational regulator CsrA (Borreliella burgdorferi (strain ATCC 35210 / DSM 4680 / CIP 102532 / B31) (Borrelia burgdorferi)).